The following is a 165-amino-acid chain: Lipoprotein signal peptidase (165 aa).

4 helical membrane-spanning segments follow: residues 7–27 (FFLL…KYWI), 28–48 (THTM…LYHV), 61–81 (FSHW…FWLW), and 87–107 (DKAL…GNLI). Catalysis depends on residues Asp117 and Asp136. The chain crosses the membrane as a helical span at residues 128–148 (SFAIFNLADTFITLGAISILI).

This sequence belongs to the peptidase A8 family.

It localises to the cell inner membrane. The catalysed reaction is Release of signal peptides from bacterial membrane prolipoproteins. Hydrolyzes -Xaa-Yaa-Zaa-|-(S,diacylglyceryl)Cys-, in which Xaa is hydrophobic (preferably Leu), and Yaa (Ala or Ser) and Zaa (Gly or Ala) have small, neutral side chains.. It participates in protein modification; lipoprotein biosynthesis (signal peptide cleavage). This protein specifically catalyzes the removal of signal peptides from prolipoproteins. The protein is Lipoprotein signal peptidase of Bartonella bacilliformis (strain ATCC 35685 / KC583 / Herrer 020/F12,63).